The following is a 273-amino-acid chain: Putative phosphoenolpyruvate synthase regulatory protein (273 aa).

Position 153–160 (153–160 (GVSRCGKT)) interacts with ADP.

Belongs to the pyruvate, phosphate/water dikinase regulatory protein family. PSRP subfamily.

It catalyses the reaction [pyruvate, water dikinase] + ADP = [pyruvate, water dikinase]-phosphate + AMP + H(+). The enzyme catalyses [pyruvate, water dikinase]-phosphate + phosphate + H(+) = [pyruvate, water dikinase] + diphosphate. Its function is as follows. Bifunctional serine/threonine kinase and phosphorylase involved in the regulation of the phosphoenolpyruvate synthase (PEPS) by catalyzing its phosphorylation/dephosphorylation. The polypeptide is Putative phosphoenolpyruvate synthase regulatory protein (Pectobacterium atrosepticum (strain SCRI 1043 / ATCC BAA-672) (Erwinia carotovora subsp. atroseptica)).